Reading from the N-terminus, the 247-residue chain is Uridylate kinase (247 aa).

Position 18–21 (18–21 (KLSG)) interacts with ATP. A UMP-binding site is contributed by Gly-60. ATP-binding residues include Gly-61 and Arg-65. UMP contacts are provided by residues Asp-80 and 141 to 148 (TGNPFFTT). Residues Thr-168, Tyr-174, and Asp-177 each contribute to the ATP site.

It belongs to the UMP kinase family. In terms of assembly, homohexamer.

The protein localises to the cytoplasm. The enzyme catalyses UMP + ATP = UDP + ADP. The protein operates within pyrimidine metabolism; CTP biosynthesis via de novo pathway; UDP from UMP (UMPK route): step 1/1. Inhibited by UTP. Catalyzes the reversible phosphorylation of UMP to UDP. The protein is Uridylate kinase of Stutzerimonas stutzeri (strain A1501) (Pseudomonas stutzeri).